The sequence spans 282 residues: Putative hydrolase BceJ2315_61450 (282 aa).

Positions 124, 126, and 155 each coordinate Mg(2+).

The protein belongs to the FAH family. It depends on Mg(2+) as a cofactor.

This Burkholderia cenocepacia (strain ATCC BAA-245 / DSM 16553 / LMG 16656 / NCTC 13227 / J2315 / CF5610) (Burkholderia cepacia (strain J2315)) protein is Putative hydrolase BceJ2315_61450.